The sequence spans 508 residues: Photosystem II CP47 reaction center protein (508 aa).

The next 6 membrane-spanning stretches (helical) occupy residues 21 to 36 (SVHI…WAGS), 101 to 115 (IILA…MWHW), 140 to 156 (GIHL…FGAF), 203 to 218 (IAAG…FHLS), 237 to 252 (VLSS…AFVV), and 457 to 472 (CFAL…HGAR).

Belongs to the PsbB/PsbC family. PsbB subfamily. As to quaternary structure, PSII is composed of 1 copy each of membrane proteins PsbA, PsbB, PsbC, PsbD, PsbE, PsbF, PsbH, PsbI, PsbJ, PsbK, PsbL, PsbM, PsbT, PsbX, PsbY, PsbZ, Psb30/Ycf12, at least 3 peripheral proteins of the oxygen-evolving complex and a large number of cofactors. It forms dimeric complexes. The cofactor is Binds multiple chlorophylls. PSII binds additional chlorophylls, carotenoids and specific lipids..

It is found in the plastid. Its subcellular location is the chloroplast thylakoid membrane. In terms of biological role, one of the components of the core complex of photosystem II (PSII). It binds chlorophyll and helps catalyze the primary light-induced photochemical processes of PSII. PSII is a light-driven water:plastoquinone oxidoreductase, using light energy to abstract electrons from H(2)O, generating O(2) and a proton gradient subsequently used for ATP formation. The chain is Photosystem II CP47 reaction center protein from Mesostigma viride (Green alga).